We begin with the raw amino-acid sequence, 152 residues long: Large ribosomal subunit protein bL9 (152 aa).

The protein belongs to the bacterial ribosomal protein bL9 family.

Functionally, binds to the 23S rRNA. The polypeptide is Large ribosomal subunit protein bL9 (Pelagibacter ubique (strain HTCC1062)).